Here is a 90-residue protein sequence, read N- to C-terminus: Small ribosomal subunit protein uS15c (90 aa).

The protein belongs to the universal ribosomal protein uS15 family. In terms of assembly, part of the 30S ribosomal subunit.

It localises to the plastid. Its subcellular location is the chloroplast. The protein is Small ribosomal subunit protein uS15c (rps15) of Phaseolus vulgaris (Kidney bean).